A 380-amino-acid polypeptide reads, in one-letter code: Homoserine O-succinyltransferase (380 aa).

An AB hydrolase-1 domain is found at 49 to 357 (NAILICHALS…ESTHGHDAFL (309 aa)). The Nucleophile role is filled by Ser155. A substrate-binding site is contributed by Arg225. Catalysis depends on residues Asp320 and His353. Residue Asp354 coordinates substrate.

The protein belongs to the AB hydrolase superfamily. MetX family. As to quaternary structure, homodimer.

It is found in the cytoplasm. The catalysed reaction is L-homoserine + succinyl-CoA = O-succinyl-L-homoserine + CoA. It participates in amino-acid biosynthesis; L-methionine biosynthesis via de novo pathway; O-succinyl-L-homoserine from L-homoserine: step 1/1. In terms of biological role, transfers a succinyl group from succinyl-CoA to L-homoserine, forming succinyl-L-homoserine. The protein is Homoserine O-succinyltransferase of Laribacter hongkongensis (strain HLHK9).